The chain runs to 107 residues: MIIVTNTAKITKGNGHKLIERFNKVGKVETMPGFLGLEVLLTQNTVDYDEVTISTRWNAKEDFQGWTKSAAFKDAHSHQGGMPEYILDNKIAYYDVKVVRMPMAAAQ.

The ABM domain occupies 2-94 (IIVTNTAKIT…YILDNKIAYY (93 aa)). N6 provides a ligand contact to Fe cation. H76 lines the heme pocket.

This sequence belongs to the antibiotic biosynthesis monooxygenase family. Heme-degrading monooxygenase IsdG subfamily. As to quaternary structure, homodimer.

The protein resides in the cytoplasm. The enzyme catalyses heme b + 3 reduced [NADPH--hemoprotein reductase] + 3 O2 = biliverdin IXalpha + CO + Fe(2+) + 3 oxidized [NADPH--hemoprotein reductase] + 3 H2O + H(+). Allows bacterial pathogens to use the host heme as an iron source. Catalyzes the oxidative degradation of the heme macrocyclic porphyrin ring to the biliverdin in the presence of a suitable electron donor such as ascorbate or NADPH--cytochrome P450 reductase, with subsequent release of free iron. This chain is Heme-degrading monooxygenase, found in Bacillus cereus (strain ATCC 14579 / DSM 31 / CCUG 7414 / JCM 2152 / NBRC 15305 / NCIMB 9373 / NCTC 2599 / NRRL B-3711).